We begin with the raw amino-acid sequence, 210 residues long: MAKALVLLSLVLVSVFVNNGTASENQRLFNNAVIRVQHLHQLAAKMINDFEDSLLPEERRQLSKIFPLSFCNSDSIEAPTGKDETQKSSVLKLLRISFRLIESWEYPSQTLSGTISNSLTIGNPSQITEKLADLKVGISVLIKGCLDGQPNMDDNDSLPLPFEDFYLTLGENNLRESFRLLACFKKDMHKVETYLRVANCRRSLDSNCTL.

The signal sequence occupies residues 1-22; sequence MAKALVLLSLVLVSVFVNNGTA. Position 38 (histidine 38) interacts with Zn(2+). A disulfide bond links cysteine 71 and cysteine 183. Glutamate 192 contacts Zn(2+). Cysteine 200 and cysteine 208 form a disulfide bridge.

Belongs to the somatotropin/prolactin family.

It localises to the secreted. In terms of biological role, growth hormone plays an important role in growth control and is involved in the regulation of several anabolic processes. Implicated as an osmoregulatory substance important for seawater adaptation. The protein is Somatotropin (gh) of Misgurnus mizolepis (Chinese weatherloach).